A 406-amino-acid chain; its full sequence is Erythromycin esterase type I (406 aa).

Its function is as follows. This enzyme confers resistance to erythromycin through inactivation by hydrolyzing the lactone ring of the antibiotic. This is Erythromycin esterase type I (ereA) from Escherichia coli.